Here is a 169-residue protein sequence, read N- to C-terminus: Large ribosomal subunit protein uL10 (169 aa).

It belongs to the universal ribosomal protein uL10 family. In terms of assembly, part of the ribosomal stalk of the 50S ribosomal subunit. The N-terminus interacts with L11 and the large rRNA to form the base of the stalk. The C-terminus forms an elongated spine to which L12 dimers bind in a sequential fashion forming a multimeric L10(L12)X complex.

Functionally, forms part of the ribosomal stalk, playing a central role in the interaction of the ribosome with GTP-bound translation factors. This chain is Large ribosomal subunit protein uL10, found in Staphylococcus saprophyticus subsp. saprophyticus (strain ATCC 15305 / DSM 20229 / NCIMB 8711 / NCTC 7292 / S-41).